The sequence spans 155 residues: Endoribonuclease YbeY (155 aa).

Zn(2+) contacts are provided by H120, H124, and H130.

The protein belongs to the endoribonuclease YbeY family. It depends on Zn(2+) as a cofactor.

Its subcellular location is the cytoplasm. Its function is as follows. Single strand-specific metallo-endoribonuclease involved in late-stage 70S ribosome quality control and in maturation of the 3' terminus of the 16S rRNA. This chain is Endoribonuclease YbeY, found in Staphylococcus aureus (strain MSSA476).